Consider the following 496-residue polypeptide: 1-aminocyclopropane-1-carboxylate synthase 4 (496 aa).

The residue at position 300 (Lys300) is an N6-(pyridoxal phosphate)lysine.

The protein belongs to the class-I pyridoxal-phosphate-dependent aminotransferase family. The cofactor is pyridoxal 5'-phosphate. In terms of tissue distribution, expressed in leaves. Expressed in shoots and leaf blades. Expressed at low levels in leaf sheaths.

It carries out the reaction S-adenosyl-L-methionine = 1-aminocyclopropane-1-carboxylate + S-methyl-5'-thioadenosine + H(+). Its pathway is alkene biosynthesis; ethylene biosynthesis via S-adenosyl-L-methionine; ethylene from S-adenosyl-L-methionine: step 1/2. In terms of biological role, catalyzes the formation of 1-aminocyclopropane-1-carboxylate, a direct precursor of ethylene in higher plants. The protein is 1-aminocyclopropane-1-carboxylate synthase 4 of Oryza sativa subsp. japonica (Rice).